Consider the following 23-residue polypeptide: Lycosin-II (23 aa).

Leucine amide is present on L21.

In terms of tissue distribution, expressed by the venom gland.

Its subcellular location is the secreted. The protein resides in the target cell membrane. Functionally, has strong antibacterial activity and biofilm inhibition effects against Gram-positive and -negative bacteria including E.coli, S.epidermidis, and A.baumannii and oxacillin-resistant S.aureus and meropenem-resistant P.aeruginosa. Is not cytotoxic against human foreskin fibroblast Hs27 or hemolytic against mammalian red blood cells. Its mechanism of action involves binding to lipoteichoic acid and lipopolysaccharide of Gram-positive and Gram-negative bacterial membranes, respectively, to destroy the bacterial membrane. In addition, it shows anti-inflammatory effects by inhibiting the expression of pro-inflammatory cytokines that are increased during bacterial infection in Hs27 cells. The chain is Lycosin-II from Lycosa singoriensis (Wolf spider).